The primary structure comprises 521 residues: Acidic amino acid decarboxylase GADL1 (521 aa).

Lys-333 carries the N6-(pyridoxal phosphate)lysine modification.

The protein belongs to the group II decarboxylase family. Homodimer. Pyridoxal 5'-phosphate serves as cofactor. As to expression, expressed very weakly in neurons and not detected in astrocytes, brain or liver.

The enzyme catalyses L-aspartate + H(+) = beta-alanine + CO2. It carries out the reaction 3-sulfino-L-alanine + H(+) = hypotaurine + CO2. It catalyses the reaction L-cysteate + H(+) = taurine + CO2. In terms of biological role, may catalyze the decarboxylation of L-aspartate, 3-sulfino-L-alanine (cysteine sulfinic acid), and L-cysteate to beta-alanine, hypotaurine and taurine, respectively. Does not exhibit any decarboxylation activity toward glutamate. This is Acidic amino acid decarboxylase GADL1 (GADL1) from Homo sapiens (Human).